Reading from the N-terminus, the 317-residue chain is Apolipoprotein E (317 aa).

An N-terminal signal peptide occupies residues 1-18 (MKVLWAALLVTFLAGCQA). A run of 8 repeats spans residues 80 to 101 (ALMD…EQLT), 102 to 123 (PVAE…ARLG), 124 to 145 (ADME…AMLG), 146 to 167 (QSTE…KRLL), 168 to 189 (RDAD…EGAE), 190 to 211 (RGVS…VRAA), 212 to 233 (TVGS…ERLR), and 234 to 255 (ARME…EQVA). The 8 X 22 AA approximate tandem repeats stretch occupies residues 80–255 (ALMDETMKEL…RLDEVKEQVA (176 aa)). Met-143 carries the post-translational modification Methionine sulfoxide. Ser-147 is modified (phosphoserine). Positions 158–168 (HLRKLRKRLLR) are LDL and other lipoprotein receptors binding. 162-165 (LRKR) is a heparin binding site. The interval 210–290 (AATVGSLAGQ…SWFEPLVEDM (81 aa)) is lipid-binding and lipoprotein association. 229 to 236 (GERLRARM) lines the heparin pocket. A homooligomerization region spans residues 266–317 (QQIRLQAEAFQARLKSWFEPLVEDMQRQWAGLVEKVQAAVGTSAAPVPSDNH). The segment at 278-290 (RLKSWFEPLVEDM) is specificity for association with VLDL.

This sequence belongs to the apolipoprotein A1/A4/E family. As to quaternary structure, homotetramer. May interact with ABCA1; functionally associated with ABCA1 in the biogenesis of HDLs. May interact with APP/A4 amyloid-beta peptide; the interaction is extremely stable in vitro but its physiological significance is unclear. May interact with MAPT. May interact with MAP2. In the cerebrospinal fluid, interacts with secreted SORL1. Interacts with PMEL; this allows the loading of PMEL luminal fragment on ILVs to induce fibril nucleation. Post-translationally, APOE exists as multiple glycosylated and sialylated glycoforms within cells and in plasma. The extent of glycosylation and sialylation are tissue and context specific. Glycated in plasma VLDL. In terms of processing, phosphorylated by FAM20C in the extracellular medium.

The protein localises to the secreted. It is found in the extracellular space. The protein resides in the extracellular matrix. It localises to the extracellular vesicle. Its subcellular location is the endosome. The protein localises to the multivesicular body. APOE is an apolipoprotein, a protein associating with lipid particles, that mainly functions in lipoprotein-mediated lipid transport between organs via the plasma and interstitial fluids. APOE is a core component of plasma lipoproteins and is involved in their production, conversion and clearance. Apolipoproteins are amphipathic molecules that interact both with lipids of the lipoprotein particle core and the aqueous environment of the plasma. As such, APOE associates with chylomicrons, chylomicron remnants, very low density lipoproteins (VLDL) and intermediate density lipoproteins (IDL) but shows a preferential binding to high-density lipoproteins (HDL). It also binds a wide range of cellular receptors including the LDL receptor/LDLR, the LDL receptor-related proteins LRP1, LRP2 and LRP8 and the very low-density lipoprotein receptor/VLDLR that mediate the cellular uptake of the APOE-containing lipoprotein particles. Finally, APOE also has a heparin-binding activity and binds heparan-sulfate proteoglycans on the surface of cells, a property that supports the capture and the receptor-mediated uptake of APOE-containing lipoproteins by cells. A main function of APOE is to mediate lipoprotein clearance through the uptake of chylomicrons, VLDLs, and HDLs by hepatocytes. APOE is also involved in the biosynthesis by the liver of VLDLs as well as their uptake by peripheral tissues ensuring the delivery of triglycerides and energy storage in muscle, heart and adipose tissues. By participating in the lipoprotein-mediated distribution of lipids among tissues, APOE plays a critical role in plasma and tissues lipid homeostasis. APOE is also involved in two steps of reverse cholesterol transport, the HDLs-mediated transport of cholesterol from peripheral tissues to the liver, and thereby plays an important role in cholesterol homeostasis. First, it is functionally associated with ABCA1 in the biogenesis of HDLs in tissues. Second, it is enriched in circulating HDLs and mediates their uptake by hepatocytes. APOE also plays an important role in lipid transport in the central nervous system, regulating neuron survival and sprouting. This is Apolipoprotein E (APOE) from Hylobates lar (Lar gibbon).